We begin with the raw amino-acid sequence, 116 residues long: U11-theraphotoxin-Hhn1b (116 aa).

The N-terminal stretch at 1–21 is a signal peptide; that stretch reads MNTVRVTFLLVFVLAVSLGQA. Positions 22-74 are excised as a propeptide; the sequence is DKDENRMEMQEKTEQGKSYLDFAENLLLQKLEELEAKLLEEDSEESRNSRQKR. Residues 60-69 are compositionally biased toward basic and acidic residues; it reads LEEDSEESRN. The interval 60–83 is disordered; it reads LEEDSEESRNSRQKRCIGEGVPCD. 3 cysteine pairs are disulfide-bonded: Cys75–Cys90, Cys82–Cys95, and Cys89–Cys110.

Belongs to the neurotoxin 14 (magi-1) family. 01 (HNTX-16) subfamily. In terms of tissue distribution, expressed by the venom gland.

It is found in the secreted. Probable ion channel inhibitor. In Cyriopagopus hainanus (Chinese bird spider), this protein is U11-theraphotoxin-Hhn1b.